The chain runs to 193 residues: uncharacterized protein (193 aa).

A helical transmembrane segment spans residues Trp-153–Tyr-170.

The protein localises to the membrane. This is an uncharacterized protein from Invertebrate iridescent virus 6 (IIV-6).